The primary structure comprises 369 residues: MPVLHVDARPGSGPGGVSPPPSGAALARRPGLADTAPFLRACRREHPGTTPVWFMRQAGRVLPEYRALRAGVAMLDSCRDAEMITEITLQPVRRFRPDAAIFFSDIVVPLVAIGLDIDIVAGIGPVVAEPVRDAVGLAALRALEPDDVPYVADAVRFLLAELGSTPLIGFAGAPFTLASYLIEGGPSRDHARTKALMYSEPKLWHALLARLADITTAFLRVQVDAGVDALQLFDSWAGALDEADYRRYVAPHSARVLAAFAGEVPRIHFGVNTGELLAAMGQAGADVVGVDWRVPLDEAARRIGPGHAVQGNLDPTAVFAPEPVLAAKVRDVCARGAEAEGHVFNLGHGVLPQTDPGVLAHVADLVHGG.

Positions 1–26 (MPVLHVDARPGSGPGGVSPPPSGAAL) are disordered. Residues 56–60 (RQAGR), Asp-105, Tyr-180, Ser-235, and His-348 contribute to the substrate site.

Belongs to the uroporphyrinogen decarboxylase family. In terms of assembly, homodimer.

Its subcellular location is the cytoplasm. The enzyme catalyses uroporphyrinogen III + 4 H(+) = coproporphyrinogen III + 4 CO2. The protein operates within porphyrin-containing compound metabolism; protoporphyrin-IX biosynthesis; coproporphyrinogen-III from 5-aminolevulinate: step 4/4. Functionally, catalyzes the decarboxylation of four acetate groups of uroporphyrinogen-III to yield coproporphyrinogen-III. In Frankia casuarinae (strain DSM 45818 / CECT 9043 / HFP020203 / CcI3), this protein is Uroporphyrinogen decarboxylase.